Reading from the N-terminus, the 126-residue chain is Histone H2B type 1-B (126 aa).

The segment covering 1–12 (MPEPSKSAPAPK) has biased composition (low complexity). Residues 1–36 (MPEPSKSAPAPKKGSKKAISKAQKKDGKKRKRSRKE) form a disordered region. Position 2 is an N-acetylproline (Pro2). Residue Glu3 is modified to ADP-ribosyl glutamic acid. The residue at position 6 (Lys6) is an N6-(2-hydroxyisobutyryl)lysine; alternate. Lys6 carries the post-translational modification N6-(beta-hydroxybutyryl)lysine; alternate. Residue Lys6 is modified to N6-acetyllysine; alternate. Lys6 bears the N6-butyryllysine; alternate mark. Lys6 is modified (N6-crotonyllysine; alternate). N6-lactoyllysine; alternate is present on Lys6. A Glycyl lysine isopeptide (Lys-Gly) (interchain with G-Cter in SUMO2); alternate cross-link involves residue Lys6. Ser7 is modified (ADP-ribosylserine). N6-(beta-hydroxybutyryl)lysine; alternate is present on Lys12. Residues Lys12 and Lys13 each carry the N6-acetyllysine; alternate modification. N6-crotonyllysine; alternate occurs at positions 12 and 13. N6-lactoyllysine; alternate is present on Lys12. Lys13 is subject to N6-(2-hydroxyisobutyryl)lysine; alternate. The residue at position 15 (Ser15) is a Phosphoserine; by STK4/MST1. Lys16, Lys17, Lys21, and Lys24 each carry N6-acetyllysine; alternate. N6-crotonyllysine; alternate occurs at positions 16, 17, 21, and 24. N6-lactoyllysine; alternate is present on residues Lys16, Lys17, Lys21, and Lys24. N6-glutaryllysine; alternate is present on Lys17. Lys21 and Lys24 each carry N6-(2-hydroxyisobutyryl)lysine; alternate. Lys21 bears the N6-(beta-hydroxybutyryl)lysine; alternate mark. Lys21 carries the post-translational modification N6-butyryllysine; alternate. Lys21 is covalently cross-linked (Glycyl lysine isopeptide (Lys-Gly) (interchain with G-Cter in SUMO2); alternate). At Lys25 the chain carries N6-(2-hydroxyisobutyryl)lysine. At Lys35 the chain carries N6-(2-hydroxyisobutyryl)lysine; alternate. An N6-(beta-hydroxybutyryl)lysine; alternate modification is found at Lys35. Lys35 is modified (N6-crotonyllysine; alternate). Position 35 is an N6-glutaryllysine; alternate (Lys35). Lys35 carries the N6-succinyllysine; alternate modification. Lys35 participates in a covalent cross-link: Glycyl lysine isopeptide (Lys-Gly) (interchain with G-Cter in ubiquitin); alternate. Glu36 carries the post-translational modification PolyADP-ribosyl glutamic acid. Residue Ser37 is modified to Phosphoserine; by AMPK. 3 positions are modified to N6-(2-hydroxyisobutyryl)lysine; alternate: Lys44, Lys47, and Lys58. N6-lactoyllysine; alternate is present on Lys44. An N6-glutaryllysine; alternate mark is found at Lys44 and Lys47. Lys47 carries the post-translational modification N6-methyllysine; alternate. Lys58 is subject to N6,N6-dimethyllysine; alternate. Residue Arg80 is modified to Dimethylated arginine. Lys86 is modified (N6-(2-hydroxyisobutyryl)lysine; alternate). Lys86 is modified (N6-acetyllysine; alternate). An N6-lactoyllysine; alternate modification is found at Lys86. Lys86 carries the N6,N6,N6-trimethyllysine; alternate modification. Omega-N-methylarginine occurs at positions 87 and 93. Lys109 is subject to N6-(2-hydroxyisobutyryl)lysine; alternate. The residue at position 109 (Lys109) is an N6-(beta-hydroxybutyryl)lysine; alternate. Lys109 bears the N6-lactoyllysine; alternate mark. Lys109 carries the N6-glutaryllysine; alternate modification. Residue Lys109 is modified to N6-methyllysine; alternate. Residue Ser113 is glycosylated (O-linked (GlcNAc) serine). Thr116 is subject to Phosphothreonine. N6-(2-hydroxyisobutyryl)lysine; alternate occurs at positions 117 and 121. An N6-(beta-hydroxybutyryl)lysine; alternate modification is found at Lys117. Residues Lys117 and Lys121 each carry the N6-lactoyllysine; alternate modification. Residues Lys117 and Lys121 each carry the N6-glutaryllysine; alternate modification. An N6-succinyllysine; alternate mark is found at Lys117 and Lys121. Lys117 carries the post-translational modification N6-methylated lysine; alternate. Residue Lys121 forms a Glycyl lysine isopeptide (Lys-Gly) (interchain with G-Cter in ubiquitin); alternate linkage.

The protein belongs to the histone H2B family. As to quaternary structure, the nucleosome is a histone octamer containing two molecules each of H2A, H2B, H3 and H4 assembled in one H3-H4 heterotetramer and two H2A-H2B heterodimers. The octamer wraps approximately 147 bp of DNA. Post-translationally, monoubiquitination at Lys-35 (H2BK34Ub) by the MSL1/MSL2 dimer is required for histone H3 'Lys-4' (H3K4me) and 'Lys-79' (H3K79me) methylation and transcription activation at specific gene loci, such as HOXA9 and MEIS1 loci. Similarly, monoubiquitination at Lys-121 (H2BK120Ub) by the RNF20/40 complex gives a specific tag for epigenetic transcriptional activation and is also prerequisite for histone H3 'Lys-4' and 'Lys-79' methylation. It also functions cooperatively with the FACT dimer to stimulate elongation by RNA polymerase II. H2BK120Ub also acts as a regulator of mRNA splicing: deubiquitination by USP49 is required for efficient cotranscriptional splicing of a large set of exons. In terms of processing, phosphorylated on Ser-15 (H2BS14ph) by STK4/MST1 during apoptosis; which facilitates apoptotic chromatin condensation. Also phosphorylated on Ser-15 in response to DNA double strand breaks (DSBs), and in correlation with somatic hypermutation and immunoglobulin class-switch recombination. Phosphorylation at Ser-37 (H2BS36ph) by AMPK in response to stress promotes transcription. GlcNAcylation at Ser-113 promotes monoubiquitination of Lys-121. It fluctuates in response to extracellular glucose, and associates with transcribed genes. Post-translationally, ADP-ribosylated by PARP1 or PARP2 on Ser-7 (H2BS6ADPr) in response to DNA damage. H2BS6ADPr promotes recruitment of CHD1L. Mono-ADP-ribosylated on Glu-3 (H2BE2ADPr) by PARP3 in response to single-strand breaks. Poly ADP-ribosylation on Glu-36 (H2BE35ADPr) by PARP1 regulates adipogenesis: it inhibits phosphorylation at Ser-37 (H2BS36ph), thereby blocking expression of pro-adipogenetic genes. In terms of processing, hydroxybutyrylation of histones is induced by starvation. Crotonylation (Kcr) is specifically present in male germ cells and marks testis-specific genes in post-meiotic cells, including X-linked genes that escape sex chromosome inactivation in haploid cells. Crotonylation marks active promoters and enhancers and confers resistance to transcriptional repressors. It is also associated with post-meiotically activated genes on autosomes. Post-translationally, lactylated in macrophages by EP300/P300 by using lactoyl-CoA directly derived from endogenous or exogenous lactate, leading to stimulates gene transcription.

Its subcellular location is the nucleus. The protein localises to the chromosome. Core component of nucleosome. Nucleosomes wrap and compact DNA into chromatin, limiting DNA accessibility to the cellular machineries which require DNA as a template. Histones thereby play a central role in transcription regulation, DNA repair, DNA replication and chromosomal stability. DNA accessibility is regulated via a complex set of post-translational modifications of histones, also called histone code, and nucleosome remodeling. This is Histone H2B type 1-B from Mus musculus (Mouse).